The sequence spans 156 residues: Small ribosomal subunit protein uS7 (156 aa).

The protein belongs to the universal ribosomal protein uS7 family. As to quaternary structure, part of the 30S ribosomal subunit. Contacts proteins S9 and S11.

Functionally, one of the primary rRNA binding proteins, it binds directly to 16S rRNA where it nucleates assembly of the head domain of the 30S subunit. Is located at the subunit interface close to the decoding center, probably blocks exit of the E-site tRNA. The chain is Small ribosomal subunit protein uS7 from Myxococcus xanthus (strain DK1622).